A 355-amino-acid chain; its full sequence is C-X-C chemokine receptor type 1 (355 aa).

The Extracellular portion of the chain corresponds to 1-40 (MEVNVWNMTDLWTWFEDEFANATGMPPVEKDYSPCLVVTQ). Asn7 and Asn21 each carry an N-linked (GlcNAc...) asparagine glycan. Residues 41-67 (TLNKYVVVVIYALVFLLSLLGNSLVML) traverse the membrane as a helical segment. Residues 68–73 (VILYSR) lie on the Cytoplasmic side of the membrane. Residues 74 to 92 (SNRSVTDVYLLNLAMADLL) form a helical membrane-spanning segment. Residues 93–114 (FALTMPIWAVSKEKGWIFGTPL) lie on the Extracellular side of the membrane. A helical membrane pass occupies residues 115-138 (CKVVSLVKEVNFYSGILLLACISV). Cysteines 115 and 192 form a disulfide. The Cytoplasmic segment spans residues 139 to 159 (DRYLAIVHATRTLTQKRHLVK). The chain crosses the membrane as a helical span at residues 160 to 184 (FICLGIWALSLILSLPFFLFRQVFS). Topologically, residues 185-204 (PNNSSPVCYEDLGHNTAKWR) are extracellular. The chain crosses the membrane as a helical span at residues 205-232 (MVLRILPHTFGFILPLLVMLFCYGFTLR). Over 233–247 (TLFQAHMGQKHRAMR) the chain is Cytoplasmic. The helical transmembrane segment at 248–270 (VIFAVVLIFLLCWLPYNLVLLAD) threads the bilayer. At 271 to 290 (TLMRTHVIQETCQRRNDIDR) the chain is on the extracellular side. A helical transmembrane segment spans residues 291 to 313 (ALDATEILGFLHSCLNPIIYAFI). The Cytoplasmic portion of the chain corresponds to 314–355 (GQNFRNGFLKMLAARGLISKEFLTRHRVTSYTSSSTNVPSNL).

The protein belongs to the G-protein coupled receptor 1 family. Interacts with IL8. Interacts with GNAI2. In terms of tissue distribution, neutrophils.

The protein localises to the cell membrane. Its function is as follows. Receptor to interleukin-8, which is a powerful neutrophils chemotactic factor. Binding of IL-8 to the receptor causes activation of neutrophils. This response is mediated via a G-protein that activates a phosphatidylinositol-calcium second messenger system. The sequence is that of C-X-C chemokine receptor type 1 (CXCR1) from Oryctolagus cuniculus (Rabbit).